A 240-amino-acid chain; its full sequence is Large ribosomal subunit protein bL25 (240 aa).

Disordered regions lie at residues 1–21 (MAENVLSAQKRTEQGKGPARR) and 204–240 (GAAPAAGAAAPAGGAAPAAGAAPAKGGEAKGGDKAKK). The span at 204-229 (GAAPAAGAAAPAGGAAPAAGAAPAKG) shows a compositional bias: low complexity. Over residues 230–240 (GEAKGGDKAKK) the composition is skewed to basic and acidic residues.

Belongs to the bacterial ribosomal protein bL25 family. CTC subfamily. In terms of assembly, part of the 50S ribosomal subunit; part of the 5S rRNA/L5/L18/L25 subcomplex. Contacts the 5S rRNA. Binds to the 5S rRNA independently of L5 and L18.

Functionally, this is one of the proteins that binds to the 5S RNA in the ribosome where it forms part of the central protuberance. The sequence is that of Large ribosomal subunit protein bL25 from Anaeromyxobacter dehalogenans (strain 2CP-1 / ATCC BAA-258).